Here is a 191-residue protein sequence, read N- to C-terminus: uncharacterized protein (191 aa).

This is an uncharacterized protein from Treponema pallidum (strain Nichols).